A 695-amino-acid polypeptide reads, in one-letter code: Elongation factor G (695 aa).

One can recognise a tr-type G domain in the interval 5-280 (SHYRNIGIFA…AVIDFLPSPT (276 aa)). GTP is bound by residues 14-21 (AHVDAGKT), 78-82 (DTPGH), and 132-135 (NKLD). A disordered region spans residues 279-299 (PTEVDPQPLTDEETGEPTGEV).

The protein belongs to the TRAFAC class translation factor GTPase superfamily. Classic translation factor GTPase family. EF-G/EF-2 subfamily.

The protein localises to the cytoplasm. In terms of biological role, catalyzes the GTP-dependent ribosomal translocation step during translation elongation. During this step, the ribosome changes from the pre-translocational (PRE) to the post-translocational (POST) state as the newly formed A-site-bound peptidyl-tRNA and P-site-bound deacylated tRNA move to the P and E sites, respectively. Catalyzes the coordinated movement of the two tRNA molecules, the mRNA and conformational changes in the ribosome. The chain is Elongation factor G from Alteromonas mediterranea (strain DSM 17117 / CIP 110805 / LMG 28347 / Deep ecotype).